The chain runs to 248 residues: Proteasome subunit alpha type-7 (248 aa).

Ser130 carries an O-linked (GlcNAc) serine glycan. Position 153 is a phosphotyrosine (Tyr153).

Belongs to the peptidase T1A family. The 26S proteasome consists of a 20S proteasome core and two 19S regulatory subunits. The 20S proteasome core is a barrel-shaped complex made of 28 subunits that are arranged in four stacked rings. The two outer rings are each formed by seven alpha subunits, and the two inner rings are formed by seven beta subunits. The proteolytic activity is exerted by three beta-subunits PSMB5, PSMB6 and PSMB7. PSMA7 interacts directly with the PSMG1-PSMG2 heterodimer which promotes 20S proteasome assembly. Interacts with HIF1A. Interacts with RAB7A. Interacts with PRKN. Interacts with ABL1 and ABL2. Interacts with EMAP2. Interacts with MAVS.

It localises to the cytoplasm. It is found in the nucleus. Component of the 20S core proteasome complex involved in the proteolytic degradation of most intracellular proteins. This complex plays numerous essential roles within the cell by associating with different regulatory particles. Associated with two 19S regulatory particles, forms the 26S proteasome and thus participates in the ATP-dependent degradation of ubiquitinated proteins. The 26S proteasome plays a key role in the maintenance of protein homeostasis by removing misfolded or damaged proteins that could impair cellular functions, and by removing proteins whose functions are no longer required. Associated with the PA200 or PA28, the 20S proteasome mediates ubiquitin-independent protein degradation. This type of proteolysis is required in several pathways including spermatogenesis (20S-PA200 complex) or generation of a subset of MHC class I-presented antigenic peptides (20S-PA28 complex). Inhibits the transactivation function of HIF-1A under both normoxic and hypoxia-mimicking conditions. The interaction with EMAP2 increases the proteasome-mediated HIF-1A degradation under the hypoxic conditions. Plays a role in hepatitis C virus internal ribosome entry site-mediated translation. Mediates nuclear translocation of the androgen receptor (AR) and thereby enhances androgen-mediated transactivation. Promotes MAVS degradation and thereby negatively regulates MAVS-mediated innate immune response. In Pongo abelii (Sumatran orangutan), this protein is Proteasome subunit alpha type-7 (PSMA7).